Here is a 361-residue protein sequence, read N- to C-terminus: Queuine tRNA-ribosyltransferase (361 aa).

The Proton acceptor role is filled by Asp-92. Residues 92–96, Asp-146, Gln-189, and Gly-216 contribute to the substrate site; that span reads DSGGF. The tract at residues 247 to 253 is RNA binding; the sequence is GVGKPAD. Asp-266 serves as the catalytic Nucleophile. An RNA binding; important for wobble base 34 recognition region spans residues 271 to 275; that stretch reads TRSGR. The Zn(2+) site is built by Cys-304, Cys-306, Cys-309, and His-335.

The protein belongs to the queuine tRNA-ribosyltransferase family. Homodimer. Within each dimer, one monomer is responsible for RNA recognition and catalysis, while the other monomer binds to the replacement base PreQ1. Requires Zn(2+) as cofactor.

The catalysed reaction is 7-aminomethyl-7-carbaguanine + guanosine(34) in tRNA = 7-aminomethyl-7-carbaguanosine(34) in tRNA + guanine. It functions in the pathway tRNA modification; tRNA-queuosine biosynthesis. In terms of biological role, catalyzes the base-exchange of a guanine (G) residue with the queuine precursor 7-aminomethyl-7-deazaguanine (PreQ1) at position 34 (anticodon wobble position) in tRNAs with GU(N) anticodons (tRNA-Asp, -Asn, -His and -Tyr). Catalysis occurs through a double-displacement mechanism. The nucleophile active site attacks the C1' of nucleotide 34 to detach the guanine base from the RNA, forming a covalent enzyme-RNA intermediate. The proton acceptor active site deprotonates the incoming PreQ1, allowing a nucleophilic attack on the C1' of the ribose to form the product. After dissociation, two additional enzymatic reactions on the tRNA convert PreQ1 to queuine (Q), resulting in the hypermodified nucleoside queuosine (7-(((4,5-cis-dihydroxy-2-cyclopenten-1-yl)amino)methyl)-7-deazaguanosine). In Rickettsia peacockii (strain Rustic), this protein is Queuine tRNA-ribosyltransferase.